Here is a 111-residue protein sequence, read N- to C-terminus: 2Fe-2S ferredoxin (111 aa).

One can recognise a 2Fe-2S ferredoxin-type domain in the interval 5-107; sequence IKVTFVINNG…GIKVRLPSAT (103 aa). [2Fe-2S] cluster-binding residues include Cys-42, Cys-48, Cys-51, and Cys-88.

The protein belongs to the adrenodoxin/putidaredoxin family. [2Fe-2S] cluster serves as cofactor.

Functionally, ferredoxin are iron-sulfur proteins that transfer electrons in a wide variety of metabolic reactions. The chain is 2Fe-2S ferredoxin (fdxB) from Rickettsia bellii (strain RML369-C).